The primary structure comprises 276 residues: Hydroxyethylthiazole kinase (276 aa).

Residues M53 and A202 each contribute to the substrate site.

It belongs to the Thz kinase family. The cofactor is Mg(2+).

It catalyses the reaction 5-(2-hydroxyethyl)-4-methylthiazole + ATP = 4-methyl-5-(2-phosphooxyethyl)-thiazole + ADP + H(+). Its pathway is cofactor biosynthesis; thiamine diphosphate biosynthesis; 4-methyl-5-(2-phosphoethyl)-thiazole from 5-(2-hydroxyethyl)-4-methylthiazole: step 1/1. Its function is as follows. Thiazole kinase involved in thiamine salvage pathway. This Arabidopsis thaliana (Mouse-ear cress) protein is Hydroxyethylthiazole kinase (THIM).